A 67-amino-acid polypeptide reads, in one-letter code: MPQLDTSTWFITITSMIMTLFILFQLKISNYSYPASPESIELKTQKHSTPWEMKWTKIYLPLLLPPR.

The chain crosses the membrane as a helical span at residues 8 to 24 (TWFITITSMIMTLFILF). Lys-54 is modified (N6-acetyllysine; alternate). Position 54 is an N6-succinyllysine; alternate (Lys-54). Residue Lys-57 is modified to N6-acetyllysine.

It belongs to the ATPase protein 8 family. As to quaternary structure, component of the ATP synthase complex composed at least of ATP5F1A/subunit alpha, ATP5F1B/subunit beta, ATP5MC1/subunit c (homooctomer), MT-ATP6/subunit a, MT-ATP8/subunit 8, ATP5ME/subunit e, ATP5MF/subunit f, ATP5MG/subunit g, ATP5MK/subunit k, ATP5MJ/subunit j, ATP5F1C/subunit gamma, ATP5F1D/subunit delta, ATP5F1E/subunit epsilon, ATP5PF/subunit F6, ATP5PB/subunit b, ATP5PD/subunit d, ATP5PO/subunit OSCP. ATP synthase complex consists of a soluble F(1) head domain (subunits alpha(3) and beta(3)) - the catalytic core - and a membrane F(0) domain - the membrane proton channel (subunits c, a, 8, e, f, g, k and j). These two domains are linked by a central stalk (subunits gamma, delta, and epsilon) rotating inside the F1 region and a stationary peripheral stalk (subunits F6, b, d, and OSCP). Interacts with PRICKLE3.

Its subcellular location is the mitochondrion membrane. Subunit 8, of the mitochondrial membrane ATP synthase complex (F(1)F(0) ATP synthase or Complex V) that produces ATP from ADP in the presence of a proton gradient across the membrane which is generated by electron transport complexes of the respiratory chain. ATP synthase complex consist of a soluble F(1) head domain - the catalytic core - and a membrane F(1) domain - the membrane proton channel. These two domains are linked by a central stalk rotating inside the F(1) region and a stationary peripheral stalk. During catalysis, ATP synthesis in the catalytic domain of F(1) is coupled via a rotary mechanism of the central stalk subunits to proton translocation. In vivo, can only synthesize ATP although its ATP hydrolase activity can be activated artificially in vitro. Part of the complex F(0) domain. The protein is ATP synthase F(0) complex subunit 8 of Sus scrofa (Pig).